The following is an 848-amino-acid chain: Translation initiation factor IF-2 (848 aa).

A disordered region spans residues 90–253 (RTYIKRAELQ…PKEKRHAFER (164 aa)). Over residues 105–170 (EAPAPEEPVQ…SAEPAIAPED (66 aa)) the composition is skewed to low complexity. Composition is skewed to basic residues over residues 204–215 (PKKKQAGHRGPR) and 236–248 (KPLR…KEKR). Positions 344–511 (KRAPVVSVMG…AVLLQAEILE (168 aa)) constitute a tr-type G domain. The interval 353–360 (GHVDHGKT) is G1. 353 to 360 (GHVDHGKT) contributes to the GTP binding site. The tract at residues 378 to 382 (GITQH) is G2. The segment at 399-402 (DTPG) is G3. GTP contacts are provided by residues 399–403 (DTPGH) and 453–456 (NKMD). The segment at 453-456 (NKMD) is G4. Residues 489–491 (SAH) form a G5 region.

This sequence belongs to the TRAFAC class translation factor GTPase superfamily. Classic translation factor GTPase family. IF-2 subfamily.

It is found in the cytoplasm. In terms of biological role, one of the essential components for the initiation of protein synthesis. Protects formylmethionyl-tRNA from spontaneous hydrolysis and promotes its binding to the 30S ribosomal subunits. Also involved in the hydrolysis of GTP during the formation of the 70S ribosomal complex. The sequence is that of Translation initiation factor IF-2 from Marinobacter nauticus (strain ATCC 700491 / DSM 11845 / VT8) (Marinobacter aquaeolei).